Consider the following 273-residue polypeptide: 4-hydroxy-tetrahydrodipicolinate reductase (273 aa).

NAD(+) contacts are provided by residues 10–15 (GAGGRM), glutamate 36, 100–102 (GTT), and 124–127 (SGNM). Histidine 157 functions as the Proton donor/acceptor in the catalytic mechanism. Histidine 158 provides a ligand contact to (S)-2,3,4,5-tetrahydrodipicolinate. Lysine 161 functions as the Proton donor in the catalytic mechanism. 167-168 (GT) serves as a coordination point for (S)-2,3,4,5-tetrahydrodipicolinate.

Belongs to the DapB family.

The protein resides in the cytoplasm. It carries out the reaction (S)-2,3,4,5-tetrahydrodipicolinate + NAD(+) + H2O = (2S,4S)-4-hydroxy-2,3,4,5-tetrahydrodipicolinate + NADH + H(+). The enzyme catalyses (S)-2,3,4,5-tetrahydrodipicolinate + NADP(+) + H2O = (2S,4S)-4-hydroxy-2,3,4,5-tetrahydrodipicolinate + NADPH + H(+). It functions in the pathway amino-acid biosynthesis; L-lysine biosynthesis via DAP pathway; (S)-tetrahydrodipicolinate from L-aspartate: step 4/4. Its function is as follows. Catalyzes the conversion of 4-hydroxy-tetrahydrodipicolinate (HTPA) to tetrahydrodipicolinate. In Rhodopseudomonas palustris (strain BisA53), this protein is 4-hydroxy-tetrahydrodipicolinate reductase.